A 137-amino-acid polypeptide reads, in one-letter code: Small ribosomal subunit protein bS6 (137 aa).

Positions 104-137 (SLVNKANNKPEPKPTKAKKEDVAPEAKEQAQTEA) are disordered. Over residues 111–137 (NKPEPKPTKAKKEDVAPEAKEQAQTEA) the composition is skewed to basic and acidic residues.

It belongs to the bacterial ribosomal protein bS6 family.

Binds together with bS18 to 16S ribosomal RNA. This Helicobacter hepaticus (strain ATCC 51449 / 3B1) protein is Small ribosomal subunit protein bS6.